Here is a 427-residue protein sequence, read N- to C-terminus: 3-phosphoshikimate 1-carboxyvinyltransferase (427 aa).

Lys22, Ser23, and Arg27 together coordinate 3-phosphoshikimate. Residue Lys22 coordinates phosphoenolpyruvate. Phosphoenolpyruvate-binding residues include Gly96 and Arg124. The 3-phosphoshikimate site is built by Ser169, Ser170, Gln171, Ser197, Asp313, Asn336, and Lys340. Gln171 provides a ligand contact to phosphoenolpyruvate. Asp313 serves as the catalytic Proton acceptor. Residues Arg344, Arg386, and Lys411 each coordinate phosphoenolpyruvate.

The protein belongs to the EPSP synthase family. In terms of assembly, monomer.

Its subcellular location is the cytoplasm. The enzyme catalyses 3-phosphoshikimate + phosphoenolpyruvate = 5-O-(1-carboxyvinyl)-3-phosphoshikimate + phosphate. It functions in the pathway metabolic intermediate biosynthesis; chorismate biosynthesis; chorismate from D-erythrose 4-phosphate and phosphoenolpyruvate: step 6/7. Functionally, catalyzes the transfer of the enolpyruvyl moiety of phosphoenolpyruvate (PEP) to the 5-hydroxyl of shikimate-3-phosphate (S3P) to produce enolpyruvyl shikimate-3-phosphate and inorganic phosphate. The chain is 3-phosphoshikimate 1-carboxyvinyltransferase from Klebsiella pneumoniae (strain 342).